Consider the following 313-residue polypeptide: Kazal-type serine protease inhibitor domain-containing protein 1 (313 aa).

The first 37 residues, 1 to 37 (MPRVFTGLPANYAAPTLALSLLLPLLLVVWTQLPVSA), serve as a signal peptide directing secretion. Positions 56–136 (EGEGCAPCRP…EVPEPLCVCR (81 aa)) constitute an IGFBP N-terminal domain. 7 disulfides stabilise this stretch: Cys-60–Cys-83, Cys-63–Cys-85, Cys-68–Cys-86, Cys-74–Cys-89, Cys-97–Cys-115, Cys-109–Cys-133, and Cys-142–Cys-175. Positions 127–177 (EVPEPLCVCRSQRPLCGSDGRTYAQICRLQEAARARLDANLTVVHPGPCES) constitute a Kazal-like domain. N-linked (GlcNAc...) asparagine glycans are attached at residues Asn-166 and Asn-190. The 98-residue stretch at 179–276 (PQILSQPHNI…GQAEASATLT (98 aa)) folds into the Ig-like C2-type domain. A disulfide bond links Cys-200 and Cys-260. N-linked (GlcNAc...) asparagine glycosylation is present at Asn-284. Residues 290–313 (QLQSRSLFPEEEEEAESEELGDYY) are disordered. Residues 298-313 (PEEEEEAESEELGDYY) are compositionally biased toward acidic residues.

In terms of tissue distribution, highly expressed in the spleen. Moderately expressed in the skin, lung and urinary bladder. Weakly expressed in the brain, tongue, esophagus, stomach, large intestine, liver and bone. Expressed in osteoblastic cells during bone regeneration. Expressed in secretory osteoblasts in the tooth.

It is found in the secreted. It localises to the extracellular space. The protein localises to the extracellular matrix. Functionally, involved in the proliferation of osteoblasts during bone formation and bone regeneration. Promotes matrix assembly. This Mus musculus (Mouse) protein is Kazal-type serine protease inhibitor domain-containing protein 1 (Kazald1).